The sequence spans 75 residues: Guanine nucleotide-binding protein G(I)/G(S)/G(O) subunit gamma-4 (75 aa).

A Cysteine methyl ester modification is found at Cys72. Cys72 carries the S-geranylgeranyl cysteine lipid modification. Residues 73–75 constitute a propeptide, removed in mature form; the sequence is TIL.

The protein belongs to the G protein gamma family. G proteins are composed of 3 units, alpha, beta and gamma. Interacts with beta-1 and beta-2, but not with beta-3. Interacts with KCNK1. Interacts (via C-terminus) with KCNK2/TREK-1 (via N-terminus); this interaction confers ion selectivity to Cl(-) and L-glutamate. Brain, kidney, pancreas, skeletal muscle and faintly in cardiac muscle.

The protein resides in the cell membrane. Functionally, guanine nucleotide-binding proteins (G proteins) are involved as a modulator or transducer in various transmembrane signaling systems. The beta and gamma chains are required for the GTPase activity, for replacement of GDP by GTP, and for G protein-effector interaction. The polypeptide is Guanine nucleotide-binding protein G(I)/G(S)/G(O) subunit gamma-4 (GNG4) (Homo sapiens (Human)).